Consider the following 566-residue polypeptide: Good for full DBP5 activity protein 2 (566 aa).

Polar residues predominate over residues 1 to 16 (MQVQKMVRDNSNNGSD). The segment at 1–41 (MQVQKMVRDNSNNGSDKSVHWERRNNNGAGPRYRSRSGNTG) is disordered.

High-copy suppressor of DBP5 mutation. The chain is Good for full DBP5 activity protein 2 (GFD2) from Saccharomyces cerevisiae (strain ATCC 204508 / S288c) (Baker's yeast).